The chain runs to 215 residues: ATP phosphoribosyltransferase (215 aa).

It belongs to the ATP phosphoribosyltransferase family. Short subfamily. Heteromultimer composed of HisG and HisZ subunits.

It is found in the cytoplasm. It carries out the reaction 1-(5-phospho-beta-D-ribosyl)-ATP + diphosphate = 5-phospho-alpha-D-ribose 1-diphosphate + ATP. The protein operates within amino-acid biosynthesis; L-histidine biosynthesis; L-histidine from 5-phospho-alpha-D-ribose 1-diphosphate: step 1/9. Catalyzes the condensation of ATP and 5-phosphoribose 1-diphosphate to form N'-(5'-phosphoribosyl)-ATP (PR-ATP). Has a crucial role in the pathway because the rate of histidine biosynthesis seems to be controlled primarily by regulation of HisG enzymatic activity. The chain is ATP phosphoribosyltransferase from Prochlorococcus marinus (strain MIT 9215).